The following is a 447-amino-acid chain: MGEPRAGAALDDGSGWTGSEEGSEEGTGGSEGAGGDGGPDAEGVWSPDIEQSFQEALAIYPPCGRRKIILSDEGKMYGRNELIARYIKLRTGKTRTRKQVSSHIQVLARRKSREIQSKLKDQVSKDKAFQTMATMSSAQLISAPSLQAKLGPTGPQASELFQFWSGGSGPPWNVPDVKPFSQTPFTLSLTPPSTDLPGYEPPQALSPLPPPTPSPPAWQARGLGTARLQLVEFSAFVEPPDAVDSYQRHLFVHISQHCPSPGAPPLESVDVRQIYDKFPEKKGGLRELYDRGPPHAFFLVKFWADLNWGPSGEEAGAGGSISSGGFYGVSSQYESLEHMTLTCSSKVCSFGKQVVEKVETERAQLEDGRFVYRLLRSPMCEYLVNFLHKLRQLPERYMMNSVLENFTILQVVTNRDTQELLLCTAYVFEVSTSERGAQHHIYRLVRD.

2 disordered regions span residues 1–46 and 183–218; these read MGEP…GVWS and TPFT…PPAW. Positions 11 to 20 are enriched in low complexity; it reads DDGSGWTGSE. Gly residues predominate over residues 25–40; the sequence is EGTGGSEGAGGDGGPD. The TEA DNA-binding region spans 38 to 114; sequence GPDAEGVWSP…QVLARRKSRE (77 aa). The tract at residues 172–447 is transcriptional activation; it reads WNVPDVKPFS…QHHIYRLVRD (276 aa). Residues 183–206 show a composition bias toward low complexity; sequence TPFTLSLTPPSTDLPGYEPPQALS. Over residues 207–216 the composition is skewed to pro residues; sequence PLPPPTPSPP.

Interacts with YAP1 and WWTR1/TAZ.

The protein localises to the nucleus. Transcription factor which plays a key role in the Hippo signaling pathway, a pathway involved in organ size control and tumor suppression by restricting proliferation and promoting apoptosis. The core of this pathway is composed of a kinase cascade wherein MST1/MST2, in complex with its regulatory protein SAV1, phosphorylates and activates LATS1/2 in complex with its regulatory protein MOB1, which in turn phosphorylates and inactivates YAP1 oncoprotein and WWTR1/TAZ. Acts by mediating gene expression of YAP1 and WWTR1/TAZ, thereby regulating cell proliferation, migration and epithelial mesenchymal transition (EMT) induction. Binds to the SPH and GT-IIC 'enhansons' (5'-GTGGAATGT-3'). May be involved in the gene regulation of neural development. Binds to the M-CAT motif. The chain is Transcriptional enhancer factor TEF-4 (TEAD2) from Homo sapiens (Human).